The following is a 299-amino-acid chain: Oxygen-dependent coproporphyrinogen-III oxidase (299 aa).

Residue Ser92 coordinates substrate. The Mn(2+) site is built by His96 and His106. The active-site Proton donor is His106. A substrate-binding site is contributed by 108-110 (NVR). 2 residues coordinate Mn(2+): His145 and His175. The interval 240-275 (YVEFNLVWDRGTLFGLQTGGRTESILMSMPPLVRWE) is important for dimerization. Position 258 to 260 (258 to 260 (GGR)) interacts with substrate.

It belongs to the aerobic coproporphyrinogen-III oxidase family. Homodimer. Mn(2+) is required as a cofactor.

It is found in the cytoplasm. The catalysed reaction is coproporphyrinogen III + O2 + 2 H(+) = protoporphyrinogen IX + 2 CO2 + 2 H2O. The protein operates within porphyrin-containing compound metabolism; protoporphyrin-IX biosynthesis; protoporphyrinogen-IX from coproporphyrinogen-III (O2 route): step 1/1. In terms of biological role, involved in the heme biosynthesis. Catalyzes the aerobic oxidative decarboxylation of propionate groups of rings A and B of coproporphyrinogen-III to yield the vinyl groups in protoporphyrinogen-IX. The protein is Oxygen-dependent coproporphyrinogen-III oxidase of Escherichia fergusonii (strain ATCC 35469 / DSM 13698 / CCUG 18766 / IAM 14443 / JCM 21226 / LMG 7866 / NBRC 102419 / NCTC 12128 / CDC 0568-73).